Here is a 1628-residue protein sequence, read N- to C-terminus: THO complex subunit 2 (1628 aa).

Basic and acidic residues-rich tracts occupy residues 1–10 (MTSLPEKDQQ) and 1360–1399 (TDNKNLVENKAVEKRVEARSSANERKQEERRRKTTPEGNR). Disordered stretches follow at residues 1 to 21 (MTSLPEKDQQGEVSVSENQKK) and 1337 to 1628 (VALN…RKIQ). 2 positions are modified to phosphothreonine: Thr1406 and Thr1408. Positions 1411-1429 (DIQRSDSKLREDQSRDRTP) are enriched in basic and acidic residues. The segment covering 1430 to 1444 (QSRSFTNENNDNLRS) has biased composition (polar residues). The segment covering 1461-1474 (ARREHESQKSDRWR) has biased composition (basic and acidic residues). Low complexity predominate over residues 1476 to 1493 (NGNVNRNPRVSNNNSTNV). Residues 1494-1526 (SRERSSEANHRTSNDNKRDEVTEGKDKNKRQDI) are compositionally biased toward basic and acidic residues. Polar residues predominate over residues 1527–1550 (SGESNSRQNNAISRAGRSNGSNRG). Residues 1551-1560 (NDSRDADGRR) show a composition bias toward basic and acidic residues. Phosphoserine is present on Ser1577. Residues 1581–1628 (LREEDERENSRRRARQDDRRDRDSRQQRDRPRDRTSRSAREEKRRKIQ) are compositionally biased toward basic and acidic residues.

This sequence belongs to the THOC2 family. Component of the THO complex. THO associates with DNA and RNA in vitro.

The protein localises to the nucleus. In terms of biological role, component the THO subcomplex of the TREX complex, which operates in coupling transcription elongation to mRNA export. The THO complex is recruited to transcribed genes and moves along the gene with the elongating polymerase during transcription. THO is important for stabilizing nascent RNA in the RNA polymerase II elongation complex by preventing formation of DNA:RNA hybrids behind the elongating polymerase. This chain is THO complex subunit 2 (tho2), found in Schizosaccharomyces pombe (strain 972 / ATCC 24843) (Fission yeast).